Here is a 199-residue protein sequence, read N- to C-terminus: Fe/S biogenesis protein NfuA (199 aa).

The [4Fe-4S] cluster site is built by Cys151 and Cys154.

This sequence belongs to the NfuA family. Homodimer. [4Fe-4S] cluster serves as cofactor.

Functionally, involved in iron-sulfur cluster biogenesis. Binds a 4Fe-4S cluster, can transfer this cluster to apoproteins, and thereby intervenes in the maturation of Fe/S proteins. Could also act as a scaffold/chaperone for damaged Fe/S proteins. The polypeptide is Fe/S biogenesis protein NfuA (Xanthomonas campestris pv. campestris (strain 8004)).